The primary structure comprises 334 residues: Probable prephenate dehydratase (334 aa).

Residues 7-224 enclose the Prephenate dehydratase domain; sequence RVLFLGPKGT…NTTRFLVLKR (218 aa). The 79-residue stretch at 244-322 folds into the ACT domain; that stretch reads LTFTTRQDDP…SDKSKQWCLW (79 aa).

The protein resides in the cytoplasm. The enzyme catalyses prephenate + H(+) = 3-phenylpyruvate + CO2 + H2O. Its pathway is amino-acid biosynthesis; L-phenylalanine biosynthesis; phenylpyruvate from prephenate: step 1/1. In terms of biological role, catayzes the decarboxylation/dehydration of prephenate to phenylpyruvate. The polypeptide is Probable prephenate dehydratase (PHA2) (Saccharomyces cerevisiae (strain ATCC 204508 / S288c) (Baker's yeast)).